Reading from the N-terminus, the 219-residue chain is Large ribosomal subunit protein uL3 (219 aa).

The segment at 133–153 (GRASHGNSRSHNVPGSIGMAQ) is disordered. The residue at position 153 (Q153) is an N5-methylglutamine.

Belongs to the universal ribosomal protein uL3 family. Part of the 50S ribosomal subunit. Forms a cluster with proteins L14 and L19. Methylated by PrmB.

One of the primary rRNA binding proteins, it binds directly near the 3'-end of the 23S rRNA, where it nucleates assembly of the 50S subunit. This Burkholderia mallei (strain NCTC 10247) protein is Large ribosomal subunit protein uL3.